We begin with the raw amino-acid sequence, 396 residues long: E3 ubiquitin-protein transferase MAEA (396 aa).

An extracellular and involved in cell to cell contact region spans residues 1–124 (MAVQESAVQL…AAASVWKRKR (124 aa)). Position 28 is a phosphothreonine (threonine 28). One can recognise a LisH domain in the interval 121 to 153 (KRKRMDRMMVEHLLRCGYYNTAVKLARQSGIED). Residues 159 to 216 (MFLTAKEVEESLERRETATCLAWCHDNKSRLRKMKSCLEFSLRIQEFIELIRQNKRLD) form the CTLH domain. The RING-Gid-type zinc finger occupies 314–381 (CPVCSRSLNK…QDDKVVCPRT (68 aa)).

As to quaternary structure, identified in the CTLH complex that contains GID4, RANBP9 and/or RANBP10, MKLN1, MAEA, RMND5A (or alternatively its paralog RMND5B), GID8, ARMC8, WDR26 and YPEL5. Within this complex, MAEA, RMND5A (or alternatively its paralog RMND5B), GID8, WDR26, and RANBP9 and/or RANBP10 form the catalytic core, while GID4, MKLN1, ARMC8 and YPEL5 have ancillary roles. Interacts with F-actin. Post-translationally, autoubiquitinated as component of the CTLH E3 ubiquitin-protein ligase complex (in vitro).

The protein resides in the cytoplasm. It is found in the nucleus. Its subcellular location is the nucleoplasm. It localises to the nucleus matrix. The protein localises to the cell membrane. The protein resides in the cytoskeleton. The enzyme catalyses S-ubiquitinyl-[E2 ubiquitin-conjugating enzyme]-L-cysteine + [acceptor protein]-L-lysine = [E2 ubiquitin-conjugating enzyme]-L-cysteine + N(6)-ubiquitinyl-[acceptor protein]-L-lysine.. Core component of the CTLH E3 ubiquitin-protein ligase complex that selectively accepts ubiquitin from UBE2H and mediates ubiquitination and subsequent proteasomal degradation of the transcription factor HBP1. MAEA and RMND5A are both required for catalytic activity of the CTLH E3 ubiquitin-protein ligase complex. MAEA is required for normal cell proliferation. The CTLH E3 ubiquitin-protein ligase complex is not required for the degradation of enzymes involved in gluconeogenesis, such as FBP1. Plays a role in erythroblast enucleation during erythrocyte maturation and in the development of mature macrophages. Mediates the attachment of erythroid cell to mature macrophages; this MAEA-mediated contact inhibits erythroid cell apoptosis. Participates in erythroblastic island formation, which is the functional unit of definitive erythropoiesis. Associates with F-actin to regulate actin distribution in erythroblasts and macrophages. May contribute to nuclear architecture and cells division events. The sequence is that of E3 ubiquitin-protein transferase MAEA (MAEA) from Macaca fascicularis (Crab-eating macaque).